The primary structure comprises 102 residues: Putative toxin YafQ (102 aa).

This sequence belongs to the RelE toxin family. YafQ subfamily.

In terms of biological role, toxic component of a type II toxin-antitoxin (TA) system. Its cognate antitoxin is RelB. The protein is Putative toxin YafQ of Haemophilus influenzae (strain ATCC 51907 / DSM 11121 / KW20 / Rd).